We begin with the raw amino-acid sequence, 156 residues long: 6,7-dimethyl-8-ribityllumazine synthase (156 aa).

5-amino-6-(D-ribitylamino)uracil contacts are provided by residues phenylalanine 22, 57–59, and 81–83; these read AYE and SVI. Position 86 to 87 (86 to 87) interacts with (2S)-2-hydroxy-3-oxobutyl phosphate; the sequence is GT. Histidine 89 (proton donor) is an active-site residue. Phenylalanine 114 lines the 5-amino-6-(D-ribitylamino)uracil pocket. (2S)-2-hydroxy-3-oxobutyl phosphate is bound at residue arginine 128.

Belongs to the DMRL synthase family. Forms an icosahedral capsid composed of 60 subunits, arranged as a dodecamer of pentamers.

The enzyme catalyses (2S)-2-hydroxy-3-oxobutyl phosphate + 5-amino-6-(D-ribitylamino)uracil = 6,7-dimethyl-8-(1-D-ribityl)lumazine + phosphate + 2 H2O + H(+). It participates in cofactor biosynthesis; riboflavin biosynthesis; riboflavin from 2-hydroxy-3-oxobutyl phosphate and 5-amino-6-(D-ribitylamino)uracil: step 1/2. Catalyzes the formation of 6,7-dimethyl-8-ribityllumazine by condensation of 5-amino-6-(D-ribitylamino)uracil with 3,4-dihydroxy-2-butanone 4-phosphate. This is the penultimate step in the biosynthesis of riboflavin. The polypeptide is 6,7-dimethyl-8-ribityllumazine synthase (Photobacterium profundum (strain SS9)).